Here is a 334-residue protein sequence, read N- to C-terminus: Phosphoribosylformylglycinamidine cyclo-ligase (334 aa).

This sequence belongs to the AIR synthase family.

The protein resides in the cytoplasm. It carries out the reaction 2-formamido-N(1)-(5-O-phospho-beta-D-ribosyl)acetamidine + ATP = 5-amino-1-(5-phospho-beta-D-ribosyl)imidazole + ADP + phosphate + H(+). It participates in purine metabolism; IMP biosynthesis via de novo pathway; 5-amino-1-(5-phospho-D-ribosyl)imidazole from N(2)-formyl-N(1)-(5-phospho-D-ribosyl)glycinamide: step 2/2. The chain is Phosphoribosylformylglycinamidine cyclo-ligase from Thermococcus gammatolerans (strain DSM 15229 / JCM 11827 / EJ3).